Consider the following 554-residue polypeptide: Phenylalanine--tRNA ligase beta subunit (554 aa).

Positions 276 to 351 (LTPRYREISI…KNHGYEKFEG (76 aa)) constitute a B5 domain. Positions 329, 335, 338, and 339 each coordinate Mg(2+).

The protein belongs to the phenylalanyl-tRNA synthetase beta subunit family. Type 2 subfamily. Tetramer of two alpha and two beta subunits. It depends on Mg(2+) as a cofactor.

Its subcellular location is the cytoplasm. The enzyme catalyses tRNA(Phe) + L-phenylalanine + ATP = L-phenylalanyl-tRNA(Phe) + AMP + diphosphate + H(+). In Methanococcus vannielii (strain ATCC 35089 / DSM 1224 / JCM 13029 / OCM 148 / SB), this protein is Phenylalanine--tRNA ligase beta subunit.